A 342-amino-acid polypeptide reads, in one-letter code: Tetraacyldisaccharide 4'-kinase (342 aa).

Residue 56-63 (TAGGAGKT) participates in ATP binding.

Belongs to the LpxK family.

The catalysed reaction is a lipid A disaccharide + ATP = a lipid IVA + ADP + H(+). It participates in glycolipid biosynthesis; lipid IV(A) biosynthesis; lipid IV(A) from (3R)-3-hydroxytetradecanoyl-[acyl-carrier-protein] and UDP-N-acetyl-alpha-D-glucosamine: step 6/6. Transfers the gamma-phosphate of ATP to the 4'-position of a tetraacyldisaccharide 1-phosphate intermediate (termed DS-1-P) to form tetraacyldisaccharide 1,4'-bis-phosphate (lipid IVA). The chain is Tetraacyldisaccharide 4'-kinase from Parvibaculum lavamentivorans (strain DS-1 / DSM 13023 / NCIMB 13966).